We begin with the raw amino-acid sequence, 262 residues long: 14-3-3 protein epsilon (262 aa).

The disordered stretch occupies residues 236 to 262 (QAEEVDPNAGDGEPKEQIQDVEDQDVS). Position 262 is a phosphoserine (S262).

It belongs to the 14-3-3 family. In terms of assembly, homodimer. Interacts with phosphorylated yki. Interacts with pav (when serine phosphorylated); the interaction is necessary for association of the complex pav-14-3-3epsilon complex to the microtubules, thereby inhibiting microtubule sliding.

Positively regulates Ras-mediated pathways. Acts downstream or parallel to Raf, but upstream of nuclear factors in Ras signaling. Three mutants have been isolated, that suppress the rough eye phenotype caused by mutated Ras1 (sev-Ras1 v12). Inhibits yki activity by restricting its nuclear localization. Together with pav, has a role in the inhibition of microtubule sliding during neurite outgrowth. This Drosophila melanogaster (Fruit fly) protein is 14-3-3 protein epsilon (14-3-3epsilon).